Here is a 208-residue protein sequence, read N- to C-terminus: Anthranilate synthase component 2 (208 aa).

Residues 3-208 (HVVLIDNHDS…SRCVEQLLAN (206 aa)) form the Glutamine amidotransferase type-1 domain. 53 to 55 (GPG) provides a ligand contact to L-glutamine. The Nucleophile; for GATase activity role is filled by Cys-80. Residues Gln-84 and 145–146 (SL) each bind L-glutamine. Catalysis depends on for GATase activity residues His-185 and Glu-187.

Heterotetramer consisting of two non-identical subunits: a beta subunit (TrpG) and a large alpha subunit (TrpE).

It catalyses the reaction chorismate + L-glutamine = anthranilate + pyruvate + L-glutamate + H(+). Its pathway is amino-acid biosynthesis; L-tryptophan biosynthesis; L-tryptophan from chorismate: step 1/5. Functionally, part of a heterotetrameric complex that catalyzes the two-step biosynthesis of anthranilate, an intermediate in the biosynthesis of L-tryptophan. In the first step, the glutamine-binding beta subunit (TrpG) of anthranilate synthase (AS) provides the glutamine amidotransferase activity which generates ammonia as a substrate that, along with chorismate, is used in the second step, catalyzed by the large alpha subunit of AS (TrpE) to produce anthranilate. In the absence of TrpG, TrpE can synthesize anthranilate directly from chorismate and high concentrations of ammonia. In Corynebacterium glutamicum (strain ATCC 13032 / DSM 20300 / JCM 1318 / BCRC 11384 / CCUG 27702 / LMG 3730 / NBRC 12168 / NCIMB 10025 / NRRL B-2784 / 534), this protein is Anthranilate synthase component 2 (trpG).